A 93-amino-acid polypeptide reads, in one-letter code: Large ribosomal subunit protein uL23cz/uL23cy (93 aa).

It belongs to the universal ribosomal protein uL23 family. As to quaternary structure, part of the 50S ribosomal subunit.

It localises to the plastid. The protein localises to the chloroplast. Functionally, binds to 23S rRNA. The protein is Large ribosomal subunit protein uL23cz/uL23cy (rpl23-A) of Drimys granadensis.